The primary structure comprises 349 residues: Bifunctional nitrilase/nitrile hydratase NIT4A (349 aa).

The 273-residue stretch at 29–301 (VRATVVQAST…EALISADLDL (273 aa)) folds into the CN hydrolase domain. Glutamate 69 (proton acceptor) is an active-site residue. Catalysis depends on lysine 156, which acts as the Proton donor. Catalysis depends on cysteine 190, which acts as the Nucleophile.

Belongs to the carbon-nitrogen hydrolase superfamily. Nitrilase family. Expressed in roots, stems, cotyledons, leaves and flowers.

It is found in the cell membrane. The catalysed reaction is a nitrile + 2 H2O = a carboxylate + NH4(+). The enzyme catalyses 3-cyano-L-alanine + 2 H2O = L-aspartate + NH4(+). It carries out the reaction L-asparagine = 3-cyano-L-alanine + H2O. Highly specific for beta-cyano-L-alanine (Ala(CN)). Low activity with 3-phenylpropionitrile (PPN). Not associated with auxin production but may be involved in cyanide detoxification. This is Bifunctional nitrilase/nitrile hydratase NIT4A (NIT4A) from Nicotiana tabacum (Common tobacco).